A 636-amino-acid polypeptide reads, in one-letter code: Probable cyclin-dependent serine/threonine-protein kinase DDB_G0278487 (636 aa).

Residues Met1–Ser41 are disordered. The Protein kinase domain maps to Tyr64–Phe343. ATP contacts are provided by residues Ile70 to Val78 and Lys93. Asp184 serves as the catalytic Proton acceptor. 4 disordered regions span residues Glu378 to Gln408, Lys473 to Tyr506, Ser527 to Asp555, and Asn579 to His636. Basic and acidic residues predominate over residues Lys473 to Arg485. The segment covering Glu486–Glu499 has biased composition (low complexity). A compositionally biased stretch (acidic residues) spans Thr529 to Asp555. 2 stretches are compositionally biased toward low complexity: residues Asn579–Gln594 and Asn617–Asn628.

Belongs to the protein kinase superfamily. CMGC Ser/Thr protein kinase family. CDC2/CDKX subfamily.

The catalysed reaction is L-seryl-[protein] + ATP = O-phospho-L-seryl-[protein] + ADP + H(+). The enzyme catalyses L-threonyl-[protein] + ATP = O-phospho-L-threonyl-[protein] + ADP + H(+). The sequence is that of Probable cyclin-dependent serine/threonine-protein kinase DDB_G0278487 from Dictyostelium discoideum (Social amoeba).